Reading from the N-terminus, the 198-residue chain is Shikimate kinase (198 aa).

26–31 is an ATP binding site; that stretch reads GSGKSQ. S30 lines the Mg(2+) pocket. Positions 48, 72, and 94 each coordinate substrate. R132 serves as a coordination point for ATP. R151 is a substrate binding site. Q167 serves as a coordination point for ATP.

Belongs to the shikimate kinase family. As to quaternary structure, monomer. Mg(2+) serves as cofactor.

Its subcellular location is the cytoplasm. The catalysed reaction is shikimate + ATP = 3-phosphoshikimate + ADP + H(+). Its pathway is metabolic intermediate biosynthesis; chorismate biosynthesis; chorismate from D-erythrose 4-phosphate and phosphoenolpyruvate: step 5/7. Catalyzes the specific phosphorylation of the 3-hydroxyl group of shikimic acid using ATP as a cosubstrate. This is Shikimate kinase from Prochlorococcus marinus (strain NATL2A).